A 197-amino-acid polypeptide reads, in one-letter code: dTTP/UTP pyrophosphatase (197 aa).

The Proton acceptor role is filled by Asp-70.

The protein belongs to the Maf family. YhdE subfamily. The cofactor is a divalent metal cation.

It is found in the cytoplasm. The catalysed reaction is dTTP + H2O = dTMP + diphosphate + H(+). It catalyses the reaction UTP + H2O = UMP + diphosphate + H(+). Its function is as follows. Nucleoside triphosphate pyrophosphatase that hydrolyzes dTTP and UTP. May have a dual role in cell division arrest and in preventing the incorporation of modified nucleotides into cellular nucleic acids. This is dTTP/UTP pyrophosphatase (yceF2) from Shigella sonnei (strain Ss046).